The following is an 88-amino-acid chain: Apolipoprotein C-I (88 aa).

Positions 1–26 are cleaved as a signal peptide; that stretch reads MRLFIALPVLIVVVAMTLEGPAPAQA.

It belongs to the apolipoprotein C1 family. As to expression, adult and fetal liver.

It localises to the secreted. Its function is as follows. Inhibitor of lipoprotein binding to the low density lipoprotein (LDL) receptor, LDL receptor-related protein, and very low density lipoprotein (VLDL) receptor. Associates with high density lipoproteins (HDL) and the triacylglycerol-rich lipoproteins in the plasma and makes up about 10% of the protein of the VLDL and 2% of that of HDL. Appears to interfere directly with fatty acid uptake and is also the major plasma inhibitor of cholesteryl ester transfer protein (CETP). Modulates the interaction of APOE with beta-migrating VLDL and inhibits binding of beta-VLDL to the LDL receptor-related protein. Binds free fatty acids and reduces their intracellular esterification. The protein is Apolipoprotein C-I (Apoc1) of Mus musculus (Mouse).